The chain runs to 466 residues: ATP synthase subunit beta (466 aa).

155–162 (GGAGVGKT) serves as a coordination point for ATP.

This sequence belongs to the ATPase alpha/beta chains family. In terms of assembly, F-type ATPases have 2 components, CF(1) - the catalytic core - and CF(0) - the membrane proton channel. CF(1) has five subunits: alpha(3), beta(3), gamma(1), delta(1), epsilon(1). CF(0) has three main subunits: a(1), b(2) and c(9-12). The alpha and beta chains form an alternating ring which encloses part of the gamma chain. CF(1) is attached to CF(0) by a central stalk formed by the gamma and epsilon chains, while a peripheral stalk is formed by the delta and b chains.

Its subcellular location is the cell inner membrane. It carries out the reaction ATP + H2O + 4 H(+)(in) = ADP + phosphate + 5 H(+)(out). In terms of biological role, produces ATP from ADP in the presence of a proton gradient across the membrane. The catalytic sites are hosted primarily by the beta subunits. The chain is ATP synthase subunit beta from Azoarcus sp. (strain BH72).